Here is a 142-residue protein sequence, read N- to C-terminus: Peptide methionine sulfoxide reductase MsrB (142 aa).

The MsrB domain maps to 3 to 126; it reads KEKLKKKLSL…NSAALRFVPF (124 aa). C115 functions as the Nucleophile in the catalytic mechanism.

The protein belongs to the MsrB Met sulfoxide reductase family.

It catalyses the reaction L-methionyl-[protein] + [thioredoxin]-disulfide + H2O = L-methionyl-(R)-S-oxide-[protein] + [thioredoxin]-dithiol. This is Peptide methionine sulfoxide reductase MsrB from Lactococcus lactis subsp. lactis (strain IL1403) (Streptococcus lactis).